A 378-amino-acid polypeptide reads, in one-letter code: Tafazzin (378 aa).

The Mitochondrial intermembrane portion of the chain corresponds to 1-137 (MFMVVCSNLR…RLRNPSKFWY (137 aa)). The disordered stretch occupies residues 46–112 (APEARPVPDE…DQDADPSLDV (67 aa)). Residues 51–67 (PVPDERYPGSQQDRKDI) are compositionally biased toward basic and acidic residues. An intramembrane segment occupies 138–158 (VVSQFVVSAVGIFSKVVLMFL). The Mitochondrial intermembrane portion of the chain corresponds to 159-378 (NKPRVYNRER…ETEKLHRERN (220 aa)). The short motif at 188-193 (HYSCFD) is the HXXXXD motif element.

This sequence belongs to the taffazin family. As to quaternary structure, associates with multiple protein complexes. Association with large protein complexes occurs only in the presence of cardiolipin.

It is found in the mitochondrion outer membrane. The protein localises to the mitochondrion inner membrane. The protein resides in the mitochondrion. It localises to the mitochondrion membrane. Its subcellular location is the golgi apparatus membrane. It is found in the endoplasmic reticulum membrane. It catalyses the reaction 1'-[1,2-diacyl-sn-glycero-3-phospho],3'-[1-acyl-sn-glycero-3-phospho]-glycerol + a 1,2-diacyl-sn-glycero-3-phosphocholine = a cardiolipin + a 1-acyl-sn-glycero-3-phosphocholine. The enzyme catalyses 1'-[1,2-di-(9Z,12Z-octadecadienoyl)-sn-glycero-3-phospho]-3'-[1-(9Z,12Z-octadecadienoyl)-sn-glycero-3-phospho]-glycerol + 1-hexadecanoyl-2-(9Z,12Z-octadecadienoyl)-sn-glycero-3-phosphocholine = 1',3'-bis-[1,2-di-(9Z,12Z-octadecadienoyl)-sn-glycero-3-phospho]-glycerol + 1-hexadecanoyl-sn-glycero-3-phosphocholine. The catalysed reaction is 1'-[1,2-di-(9Z,12Z-octadecadienoyl)-sn-glycero-3-phospho]-3'-[2-(9Z,12Z-octadecadienoyl)-sn-glycero-3-phospho]-glycerol + 1-hexadecanoyl-2-(9Z,12Z-octadecadienoyl)-sn-glycero-3-phosphocholine = 1',3'-bis-[1,2-di-(9Z,12Z-octadecadienoyl)-sn-glycero-3-phospho]-glycerol + 1-hexadecanoyl-sn-glycero-3-phosphocholine. It carries out the reaction 1,2-di-(9Z,12Z-octadecadienoyl)-sn-glycero-3-phosphocholine + 1'-[1,2-di-(9Z,12Z-octadecadienoyl)-sn-glycero-3-phospho]-3'-[1-(9Z,12Z-octadecadienoyl)-sn-glycero-3-phospho]-glycerol = 1-(9Z,12Z)-octadecadienoyl-sn-glycero-3-phosphocholine + 1',3'-bis-[1,2-di-(9Z,12Z-octadecadienoyl)-sn-glycero-3-phospho]-glycerol. It catalyses the reaction 1-tetradecanoyl-sn-glycero-3-phosphocholine + 1',3'-bis-[1,2-di-(9Z,12Z-octadecadienoyl)-sn-glycero-3-phospho]-glycerol = 1-tetradecanoyl-2-(9Z,12Z-octadecadienoyl)-sn-glycero-3-phosphocholine + 1'-[1,2-di-(9Z,12Z-octadecadienoyl)-sn-glycero-3-phospho]-3'-[1-(9Z,12Z-octadecadienoyl)-sn-glycero-3-phospho]-glycerol. The enzyme catalyses 1',3'-bis[1,2-di-(9Z-octadecenoyl)-sn-glycero-3-phospho]-glycerol + 1-nonadecanoyl-sn-glycero-3-phosphocholine = 1-nonadecanoyl-2-(9Z-octadecenoyl)-sn-glycero-3-phosphocholine + 1'-[1,2-di-(9Z-octadecenoyl)-sn-glycero-3-phospho]-3'-[1-(9Z-octadecenoyl)-sn-glycero-3-phospho]-glycerol. The catalysed reaction is a 1,2-diacyl-sn-glycero-3-phospho-(1'-sn-glycerol) + a 1-acyl-sn-glycero-3-phosphocholine = 1-acyl-sn-glycero-3-phospho-(1'-sn-glycerol) + a 1,2-diacyl-sn-glycero-3-phosphocholine. It carries out the reaction 1-hexadecanoyl-2-(9Z,12Z-octadecadienoyl)-sn-glycero-3-phospho-(1'-sn-glycerol) + 1-hexadecanoyl-sn-glycero-3-phosphocholine = 1-hexadecanoyl-sn-glycero-3-phospho-(1'-sn-glycerol) + 1-hexadecanoyl-2-(9Z,12Z-octadecadienoyl)-sn-glycero-3-phosphocholine. It catalyses the reaction 1,2-di-(9Z-octadecenoyl)-sn-glycero-3-phospho-(1'-sn-glycerol) + 1-nonadecanoyl-sn-glycero-3-phosphocholine = 1-nonadecanoyl-2-(9Z-octadecenoyl)-sn-glycero-3-phosphocholine + 1-(9Z-octadecenoyl)-sn-glycero-3-phospho-(1'-sn-glycerol). The enzyme catalyses a 1,2-diacyl-sn-glycero-3-phosphate + a 1-acyl-sn-glycero-3-phosphocholine = a 1-acyl-sn-glycero-3-phosphate + a 1,2-diacyl-sn-glycero-3-phosphocholine. The catalysed reaction is 1-hexadecanoyl-2-(9Z,12Z-octadecadienoyl)-sn-glycero-3-phosphate + 1-hexadecanoyl-sn-glycero-3-phosphocholine = 1-hexadecanoyl-2-(9Z,12Z-octadecadienoyl)-sn-glycero-3-phosphocholine + 1-hexadecanoyl-sn-glycero-3-phosphate. It carries out the reaction 1-hexadecanoyl-2-(9Z,12Z-octadecadienoyl)-sn-glycero-3-phosphocholine + 1-(9Z-octadecenoyl)-sn-glycero-3-phosphate = 1-(9Z)-octadecenoyl-2-(9Z,12Z)-octadecadienoyl-sn-glycero-3-phosphate + 1-hexadecanoyl-sn-glycero-3-phosphocholine. It catalyses the reaction a 1-acyl-sn-glycero-3-phosphocholine + a 1,2-diacyl-sn-glycero-3-phosphoethanolamine = a 1-acyl-sn-glycero-3-phosphoethanolamine + a 1,2-diacyl-sn-glycero-3-phosphocholine. The enzyme catalyses 1-hexadecanoyl-2-(9Z,12Z-octadecadienoyl)-sn-glycero-3-phosphoethanolamine + 1-hexadecanoyl-sn-glycero-3-phosphocholine = 1-hexadecanoyl-2-(9Z,12Z-octadecadienoyl)-sn-glycero-3-phosphocholine + 1-hexadecanoyl-sn-glycero-3-phosphoethanolamine. The catalysed reaction is 1,2-di-(9Z,12Z-octadecadienoyl)-sn-glycero-3-phosphoethanolamine + 1-tetradecanoyl-sn-glycero-3-phosphocholine = 1-(9Z,12Z-octadecadienoyl)-sn-glycero-3-phosphoethanolamine + 1-tetradecanoyl-2-(9Z,12Z-octadecadienoyl)-sn-glycero-3-phosphocholine. It carries out the reaction 1'-[1,2-diacyl-sn-glycero-3-phospho],3'-[1-acyl-sn-glycero-3-phospho]-glycerol + a 1,2-diacyl-sn-glycero-3-phosphoethanolamine = a cardiolipin + a 1-acyl-sn-glycero-3-phosphoethanolamine. It catalyses the reaction 1-hexadecanoyl-2-(9Z,12Z-octadecadienoyl)-sn-glycero-3-phosphoethanolamine + 1'-[1,2-di-(9Z,12Z-octadecadienoyl)-sn-glycero-3-phospho]-3'-[1-(9Z,12Z-octadecadienoyl)-sn-glycero-3-phospho]-glycerol = 1',3'-bis-[1,2-di-(9Z,12Z-octadecadienoyl)-sn-glycero-3-phospho]-glycerol + 1-hexadecanoyl-sn-glycero-3-phosphoethanolamine. The enzyme catalyses 1'-[1-(9Z,12Z-octadecadienoyl)-2-(9Z-octadecenoyl)-sn-glycero-3-phospho]-3'-[1-(9Z,12Z-octadecadienoyl)-sn-glycero-3-phospho]-glycerol + 1',3'-bis-[1,2-di-(9Z,12Z-octadecadienoyl)-sn-glycero-3-phospho]-glycerol = 1'-[1,2-di-(9Z,12Z-octadecadienoyl)-sn-glycero-3-phospho]-3'-[1-(9Z,12Z-octadecadienoyl)-2-(9Z-octadecenoyl)-sn-glycero-3-phospho]-glycerol + 1'-[1,2-di-(9Z,12Z-octadecadienoyl)-sn-glycero-3-phospho]-3'-[1-(9Z,12Z-octadecadienoyl)-sn-glycero-3-phospho]-glycerol. The catalysed reaction is 1,2-di-(9Z-hexadecenoyl)-sn-glycero-3-phosphocholine + 1-hexadecanoyl-sn-glycero-3-phosphocholine = 1-hexadecanoyl-2-(9Z-hexadecenoyl)-sn-glycero-3-phosphocholine + 1-(9Z-hexadecenoyl)-sn-glycero-3-phosphocholine. It carries out the reaction 1,2-dioctadecanoyl-sn-glycero-3-phosphocholine + 1-hexadecanoyl-sn-glycero-3-phosphocholine = 1-hexadecanoyl-2-octadecanoyl-sn-glycero-3-phosphocholine + 1-octadecanoyl-sn-glycero-3-phosphocholine. It catalyses the reaction 1,2-di-(9Z-octadecenoyl)-sn-glycero-3-phosphocholine + 1-hexadecanoyl-sn-glycero-3-phosphocholine = 1-hexadecanoyl-2-(9Z-octadecenoyl)-sn-glycero-3-phosphocholine + 1-(9Z-octadecenoyl)-sn-glycero-3-phosphocholine. The enzyme catalyses 1,2-di-(9Z,12Z-octadecadienoyl)-sn-glycero-3-phosphocholine + 1-(9Z-octadecenoyl)-sn-glycero-3-phosphocholine = 1-(9Z)-octadecenoyl-2-(9Z,12Z)-octadecadienoyl-sn-glycero-3-phosphocholine + 1-(9Z,12Z)-octadecadienoyl-sn-glycero-3-phosphocholine. The catalysed reaction is 1,2-di-(9Z,12Z,15Z-octadecatrienoyl)-sn-glycero-3-phosphocholine + 1-tetradecanoyl-sn-glycero-3-phosphocholine = 1-tetradecanoyl-2-(9Z,12Z,15Z-octadecatrienoyl)-sn-glycero-3-phosphocholine + 1-(9Z,12Z,15Z-octadecatrienoyl)-sn-glycero-3-phosphocholine. It carries out the reaction 1-nonadecanoyl-sn-glycero-3-phosphocholine + 1-octadecanoyl-2-(9Z-octadecenoyl)-sn-glycero-3-phosphocholine = 1-nonadecanoyl-2-(9Z-octadecenoyl)-sn-glycero-3-phosphocholine + 1-octadecanoyl-sn-glycero-3-phosphocholine. It catalyses the reaction 1-(9Z)-octadecenoyl-2-octadecanoyl-sn-glycero-3-phosphocholine + 1-nonadecanoyl-sn-glycero-3-phosphocholine = 2-octadecanoyl-sn-glycero-3-phosphocholine + 1-nonadecanoyl-2-(9Z-octadecenoyl)-sn-glycero-3-phosphocholine. The protein operates within phospholipid metabolism. Acyltransferase required to remodel newly synthesized phospholipid cardiolipin (1',3'-bis-[1,2-diacyl-sn-glycero-3-phospho]-glycerol or CL), a key component of the mitochondrial inner membrane, with tissue specific acyl chains necessary for adequate mitochondrial function. Its role in cellular physiology is to improve mitochondrial performance. CL is critical for the coassembly of lipids and proteins in mitochondrial membranes. For instance, remodeling of the acyl groups of CL in the mitochondrial inner membrane affects the assembly and stability of respiratory chain complex IV and its supercomplex forms. Catalyzes the transacylation between phospholipids and lysophospholipids, with the highest rate being between phosphatidylcholine (1,2-diacyl-sn-glycero-3-phosphocholine or PC) and CL. Catalyzes both 1-acyl-sn-glycero-3-phosphocholine (lysophosphatidylcholine or LPC) reacylation and PC-CL transacylation, that means, it exchanges acyl groups between CL and PC by a combination of forward and reverse transacylations. Also catalyzes transacylations between other phospholipids such as phosphatidylethanolamine (1,2-diacyl-sn-glycero-3-phosphoethanolamine or PE) and CL, between PC and PE, and between PC and phosphatidate (1,2-diacyl-sn-glycero-3-phosphate or PA), although at lower rate. Not regiospecific, it transfers acyl groups into any of the sn-1 and sn-2 positions of the monolysocardiolipin (MLCL), which is an important prerequisite for uniformity and symmetry in CL acyl distribution. Cannot transacylate dilysocardiolipin (DLCL), thus, the role of MLCL is limited to that of an acyl acceptor. CoA-independent, it can reshuffle molecular species within a single phospholipid class. Redistributes fatty acids between MLCL, CL, and other lipids, which prolongs the half-life of CL. Its action is completely reversible, which allows for cyclic changes, such as fission and fusion or bending and flattening of the membrane. Hence, by contributing to the flexibility of the lipid composition, it plays an important role in the dynamics of mitochondria membranes. Essential for the final stage of spermatogenesis, spermatid individualization. Required for the initiation of mitophagy. The protein is Tafazzin of Drosophila melanogaster (Fruit fly).